A 924-amino-acid chain; its full sequence is TBC1 domain family member 30 (924 aa).

Gly residues predominate over residues 1–11; it reads MDVLPTGGGRP. Disordered stretches follow at residues 1–76 and 94–134; these read MDVL…GRTS and EEEE…RSGA. A compositionally biased stretch (basic and acidic residues) spans 47–59; it reads GAAERPRRSRDTW. Positions 249–457 constitute a Rab-GAP TBC domain; it reads GIPKEWRRKV…KIWDSVFFEG (209 aa). 3 disordered regions span residues 541–564, 776–806, and 838–924; these read KPTS…PDDE, GCTA…PVFG, and HPPC…TKKR. Residues 555-564 are compositionally biased toward acidic residues; that stretch reads SDEENDPDDE. Ser800 carries the phosphoserine modification. Residues 858 to 870 show a composition bias toward polar residues; sequence TSKAPQGSNSKTP. Gly residues predominate over residues 914–924; sequence PGGGNSGTKKR.

The protein localises to the cell membrane. Its function is as follows. May act as a GTPase-activating protein for Rab family protein(s). The polypeptide is TBC1 domain family member 30 (TBC1D30) (Homo sapiens (Human)).